Consider the following 1391-residue polypeptide: Periaxin (1391 aa).

The residue at position 7 (serine 7) is a Phosphoserine. A PDZ domain is found at 16–99; sequence LVEIIVETEA…YKVSFCLKRT (84 aa). A Nuclear export signal motif is present at residues 70-84; it reads VFFENFKYEDALRLL. Positions 118–196 match the Nuclear localization signal motif; sequence KGPRAKVAKL…RLQLPRLRVR (79 aa). At serine 243 the chain carries Phosphoserine. 12 repeat units span residues 432 to 436, 440 to 444, 448 to 452, 456 to 460, 464 to 468, 469 to 473, 474 to 478, 482 to 486, 487 to 491, 495 to 499, 500 to 504, and 508 to 512. The segment at 432-719 is 45 X 5 AA approximate tandem repeats of [LVMGIED]-[PQSKHARMI]-[EDKLVTR]-[LIVMAP]-[AQKHRPEVSD]; that may have a tripeptide spacer of [LVIDEA]-[PMSVI]-[KEATDQ]; that stretch reads GPEVKAPTGP…MQVSQVPEVQ (288 aa). The stretch at 513 to 517 is one 13; approximate repeat; that stretch reads WPEMA. A run of 32 repeats spans residues 521–525, 526–530, 534–538, 539–543, 547–551, 552–556, 560–564, 565–569, 573–577, 578–582, 583–587, 591–595, 596–600, 601–605, 609–613, 614–618, 619–623, 627–631, 632–636, 637–641, 645–649, 650–654, 655–659, 663–667, 671–675, 676–680, 684–688, 689–693, 697–701, 702–706, 707–711, and 715–719. Residues serine 848, serine 979, serine 1028, serine 1279, serine 1283, serine 1285, serine 1293, serine 1331, and serine 1337 each carry the phosphoserine modification. The interval 1267–1366 is disordered; sequence LPRVGFSQSE…DREEGGFRVR (100 aa). Residues 1275–1285 are compositionally biased toward low complexity; it reads SESVSGEGSPS. The segment covering 1354-1363 has biased composition (basic and acidic residues); that stretch reads GSRDREEGGF. Phosphoserine is present on serine 1369.

Belongs to the periaxin family. In terms of assembly, homodimer (via PDZ domain). Interacts with SCN10A. Found in a complex with SCN10A. Interacts with DRP2. Identified in a dystroglycan complex that contains at least PRX, DRP2, UTRN, DMD and DAG1. Detected in a complex composed of at least EZR, AHNAK, PPL and PRX. Identified in a complex with EZR, AHNAK, BFSP1, BFSP2, ANK2, PLEC, VIM and spectrin. Detected in myelinating Schwann cells in intramuscular nerves in triangularis sterni. Detected in sciatic nerve. Detected in eye lens fiber cells. Isoform 1 is detected in myelinating Schwann cells in sciatic nerve. Isoform 2 is detected in myelinating Schwann cells in sciatic nerve (at protein level). Detected in sciatic nerve.

Its subcellular location is the cell membrane. It localises to the cell junction. It is found in the nucleus. The protein resides in the cytoplasm. Its function is as follows. Scaffolding protein that functions as part of a dystroglycan complex in Schwann cells, and as part of EZR and AHNAK-containing complexes in eye lens fiber cells. Required for the maintenance of the peripheral myelin sheath that is essential for normal transmission of nerve impulses and normal perception of sensory stimuli. Required for normal transport of MBP mRNA from the perinuclear to the paranodal regions. Required for normal remyelination after nerve injury. Required for normal elongation of Schwann cells and normal length of the internodes between the nodes of Ranvier. The demyelinated nodes of Ranvier permit saltatory transmission of nerve impulses; shorter internodes cause slower transmission of nerve impulses. Required for the formation of appositions between the abaxonal surface of the myelin sheath and the Schwann cell plasma membrane; the Schwann cell cytoplasm is restricted to regions between these appositions. Required for the formation of Cajal bands and of Schmidt-Lanterman incisures that correspond to short, cytoplasm-filled regions on myelinated nerves. Recruits DRP2 to the Schwann cell plasma membrane. Required for normal protein composition of the eye lens fiber cell plasma membrane and normal eye lens fiber cell morphology. This Mus musculus (Mouse) protein is Periaxin (Prx).